A 186-amino-acid chain; its full sequence is Peptidyl-tRNA hydrolase (186 aa).

Y14 is a tRNA binding site. The active-site Proton acceptor is the H19. TRNA contacts are provided by Y64, N66, and N113.

It belongs to the PTH family. Monomer.

It is found in the cytoplasm. It carries out the reaction an N-acyl-L-alpha-aminoacyl-tRNA + H2O = an N-acyl-L-amino acid + a tRNA + H(+). Hydrolyzes ribosome-free peptidyl-tRNAs (with 1 or more amino acids incorporated), which drop off the ribosome during protein synthesis, or as a result of ribosome stalling. Functionally, catalyzes the release of premature peptidyl moieties from peptidyl-tRNA molecules trapped in stalled 50S ribosomal subunits, and thus maintains levels of free tRNAs and 50S ribosomes. In Agathobacter rectalis (strain ATCC 33656 / DSM 3377 / JCM 17463 / KCTC 5835 / VPI 0990) (Eubacterium rectale), this protein is Peptidyl-tRNA hydrolase.